Consider the following 352-residue polypeptide: PDZ and LIM domain protein 2 (352 aa).

Residues 1–84 (MALTVDVAGP…PLRLQLDRSQ (84 aa)) enclose the PDZ domain. Disordered regions lie at residues 67–97 (SKIR…DSSL) and 111–149 (YTES…TGEA). A compositionally biased stretch (polar residues) spans 81–95 (DRSQATSPGQTNGDS). Residues 111–135 (YTESQSSLRSSYSSPTSLSPRAGSP) are compositionally biased toward low complexity. Ser124 is subject to Phosphoserine. Thr126 bears the Phosphothreonine mark. 10 positions are modified to phosphoserine: Ser127, Ser129, Ser134, Ser137, Ser143, Ser161, Ser197, Ser203, Ser213, and Ser266. A disordered region spans residues 170–213 (LSYSGRPGSRQAGLGRAGDSAVLVLPPSPGPRSSRPSMDSEGGS). One can recognise an LIM zinc-binding domain in the interval 284–344 (HTCEKCSTSI…EKHARQRYSA (61 aa)).

In terms of assembly, interacts with alpha-actinins ACTN1 and ACTN4, FLNA and MYH9. Interacts (via LIM zinc-binding domain) with MKRN2.

The protein localises to the cytoplasm. The protein resides in the nucleus. It localises to the cytoskeleton. Functionally, probable adapter protein located at the actin cytoskeleton that promotes cell attachment. Necessary for the migratory capacity of epithelial cells. Overexpression enhances cell adhesion to collagen and fibronectin and suppresses anchorage independent growth. May contribute to tumor cell migratory capacity. This is PDZ and LIM domain protein 2 (PDLIM2) from Homo sapiens (Human).